Here is a 166-residue protein sequence, read N- to C-terminus: UPF0254 protein Mevan_0254 (166 aa).

Belongs to the UPF0254 family.

This is UPF0254 protein Mevan_0254 from Methanococcus vannielii (strain ATCC 35089 / DSM 1224 / JCM 13029 / OCM 148 / SB).